The sequence spans 198 residues: 7-methyl-GTP pyrophosphatase (198 aa).

Aspartate 69 functions as the Proton acceptor in the catalytic mechanism.

Belongs to the Maf family. YceF subfamily. A divalent metal cation is required as a cofactor.

It is found in the cytoplasm. The enzyme catalyses N(7)-methyl-GTP + H2O = N(7)-methyl-GMP + diphosphate + H(+). Functionally, nucleoside triphosphate pyrophosphatase that hydrolyzes 7-methyl-GTP (m(7)GTP). May have a dual role in cell division arrest and in preventing the incorporation of modified nucleotides into cellular nucleic acids. This chain is 7-methyl-GTP pyrophosphatase, found in Yersinia pestis bv. Antiqua (strain Antiqua).